We begin with the raw amino-acid sequence, 311 residues long: tRNA dimethylallyltransferase (311 aa).

9-16 (GPTAVGKT) lines the ATP pocket. 11-16 (TAVGKT) contributes to the substrate binding site. An interaction with substrate tRNA region spans residues 34-37 (DSMQ).

It belongs to the IPP transferase family. As to quaternary structure, monomer. It depends on Mg(2+) as a cofactor.

The catalysed reaction is adenosine(37) in tRNA + dimethylallyl diphosphate = N(6)-dimethylallyladenosine(37) in tRNA + diphosphate. Catalyzes the transfer of a dimethylallyl group onto the adenine at position 37 in tRNAs that read codons beginning with uridine, leading to the formation of N6-(dimethylallyl)adenosine (i(6)A). The protein is tRNA dimethylallyltransferase of Clostridium botulinum (strain Hall / ATCC 3502 / NCTC 13319 / Type A).